The following is a 121-amino-acid chain: Protein MGF 110-5L (121 aa).

The signal sequence occupies residues 1 to 20 (MLVIFLGILGLLANQVSSQL). N-linked (GlcNAc...) asparagine; by host glycans are attached at residues Asn62 and Asn116.

It belongs to the asfivirus MGF 110 family.

The chain is Protein MGF 110-5L from African swine fever virus (isolate Portugal/Lis 57/1957) (ASFV).